A 148-amino-acid chain; its full sequence is Protein Turandot Z (148 aa).

The N-terminal stretch at 1–23 is a signal peptide; that stretch reads MYFAIRLSFVLAVLFCLTGNGSA.

This sequence belongs to the Turandot family.

The protein localises to the secreted. In terms of biological role, a humoral factor that may play a role in stress tolerance. The protein is Protein Turandot Z of Drosophila sechellia (Fruit fly).